A 92-amino-acid polypeptide reads, in one-letter code: Probable glutathione transferase (92 aa).

One can recognise a GST N-terminal domain in the interval 1–71 (RTCPYAQRAR…YLEEAFPDPP (71 aa)). The active-site Nucleophile is the C3. Residues K30, V43, and 55 to 56 (ES) contribute to the glutathione site.

It belongs to the GST superfamily. Omega family.

The enzyme catalyses RX + glutathione = an S-substituted glutathione + a halide anion + H(+). It catalyses the reaction L-dehydroascorbate + 2 glutathione = glutathione disulfide + L-ascorbate. The catalysed reaction is methylarsonate + 2 glutathione + H(+) = methylarsonous acid + glutathione disulfide + H2O. Functionally, exhibits glutathione-dependent thiol transferase activity. Has dehydroascorbate reductase activity and may contribute to the recycling of ascorbic acid. Participates in the biotransformation of inorganic arsenic and reduces monomethylarsonic acid (MMA). The sequence is that of Probable glutathione transferase from Aplysia californica (California sea hare).